A 227-amino-acid polypeptide reads, in one-letter code: Monoamine regulon transcriptional regulator (227 aa).

An HTH luxR-type domain is found at 155 to 220 (EDDLPAILTA…ELVSRTWMPA (66 aa)). The H-T-H motif DNA-binding region spans 179–198 (NKLIARQLDISLSTVKTHLR).

Functionally, positive regulatory protein for the induction of arylsulfatase synthesis (maoA), tyramine oxidase (tynA), maoC, maoE/F operon, and atsB/A operon which are all regulated by monoamines, and included under the common term of monoamine regulon. The sequence is that of Monoamine regulon transcriptional regulator (moaR) from Klebsiella aerogenes (Enterobacter aerogenes).